Here is a 406-residue protein sequence, read N- to C-terminus: Argininosuccinate synthase (406 aa).

ATP-binding positions include 13–21 and Ala-40; that span reads AYSGGLDTS. L-citrulline-binding residues include Tyr-91 and Ser-96. Gly-121 contributes to the ATP binding site. Thr-123, Asn-127, and Asp-128 together coordinate L-aspartate. Asn-127 lines the L-citrulline pocket. L-citrulline is bound by residues Arg-131, Ser-182, Ser-191, Glu-267, and Tyr-279.

The protein belongs to the argininosuccinate synthase family. Type 1 subfamily. Homotetramer.

Its subcellular location is the cytoplasm. The enzyme catalyses L-citrulline + L-aspartate + ATP = 2-(N(omega)-L-arginino)succinate + AMP + diphosphate + H(+). It functions in the pathway amino-acid biosynthesis; L-arginine biosynthesis; L-arginine from L-ornithine and carbamoyl phosphate: step 2/3. The protein is Argininosuccinate synthase of Brucella anthropi (strain ATCC 49188 / DSM 6882 / CCUG 24695 / JCM 21032 / LMG 3331 / NBRC 15819 / NCTC 12168 / Alc 37) (Ochrobactrum anthropi).